The following is an 894-amino-acid chain: Alanine--tRNA ligase (894 aa).

Positions 569, 573, 683, and 687 each coordinate Zn(2+).

This sequence belongs to the class-II aminoacyl-tRNA synthetase family. Zn(2+) is required as a cofactor.

Its subcellular location is the cytoplasm. The catalysed reaction is tRNA(Ala) + L-alanine + ATP = L-alanyl-tRNA(Ala) + AMP + diphosphate. In terms of biological role, catalyzes the attachment of alanine to tRNA(Ala) in a two-step reaction: alanine is first activated by ATP to form Ala-AMP and then transferred to the acceptor end of tRNA(Ala). Also edits incorrectly charged Ser-tRNA(Ala) and Gly-tRNA(Ala) via its editing domain. This is Alanine--tRNA ligase from Chloroflexus aurantiacus (strain ATCC 29366 / DSM 635 / J-10-fl).